Reading from the N-terminus, the 428-residue chain is Pyruvate kinase (428 aa).

Arg-34 is a substrate binding site. The K(+) site is built by Asn-36, Ser-38, Asp-68, and Thr-69. 36 to 39 (NFSH) contacts ATP. ATP-binding residues include Arg-75 and Lys-152. Glu-214 lines the Mg(2+) pocket. Positions 237, 238, and 270 each coordinate substrate. Mg(2+) is bound at residue Asp-238.

It belongs to the pyruvate kinase family. In terms of assembly, homotetramer. Mg(2+) serves as cofactor. The cofactor is K(+).

The enzyme catalyses pyruvate + ATP = phosphoenolpyruvate + ADP + H(+). The protein operates within carbohydrate degradation; glycolysis; pyruvate from D-glyceraldehyde 3-phosphate: step 5/5. In Encephalitozoon cuniculi (strain GB-M1) (Microsporidian parasite), this protein is Pyruvate kinase (PYK1).